Here is a 333-residue protein sequence, read N- to C-terminus: Geranylgeranyl pyrophosphate synthase olcC (333 aa).

Residues Lys-61, Arg-64, and His-93 each contribute to the isopentenyl diphosphate site. Residues Asp-100 and Asp-104 each contribute to the Mg(2+) site. Arg-109 contacts dimethylallyl diphosphate. Arg-110 is a binding site for isopentenyl diphosphate. 3 residues coordinate dimethylallyl diphosphate: Lys-187, Thr-188, and Gln-221. Position 224 (Asp-224) interacts with Mg(2+). Dimethylallyl diphosphate is bound by residues Asn-228, Lys-238, and Lys-248.

Belongs to the FPP/GGPP synthase family. It depends on Mg(2+) as a cofactor.

It carries out the reaction isopentenyl diphosphate + dimethylallyl diphosphate = (2E)-geranyl diphosphate + diphosphate. The enzyme catalyses isopentenyl diphosphate + (2E)-geranyl diphosphate = (2E,6E)-farnesyl diphosphate + diphosphate. It catalyses the reaction isopentenyl diphosphate + (2E,6E)-farnesyl diphosphate = (2E,6E,10E)-geranylgeranyl diphosphate + diphosphate. It participates in secondary metabolite biosynthesis; terpenoid biosynthesis. Its function is as follows. Geranylgeranyl pyrophosphate synthase; part of the gene cluster that mediates the biosynthesis of 15-deoxyoxalicine B. The first step of the pathway is the synthesis of nicotinyl-CoA from nicotinic acid by the nicotinic acid-CoA ligase olcI. Nicotinyl-CoA is then a substrate of polyketide synthase olcA to produce 4-hydroxy-6-(3-pyridinyl)-2H-pyran-2-one (HPPO) which is further prenylated by the polyprenyl transferase olcH to yield geranylgeranyl-HPPO. Geranylgeranyl pyrophosphate is provided by the cluster-specific geranylgeranyl pyrophosphate synthase olcC. The FAD-dependent monooxygenase olcE catalyzes the epoxidation of geranylgeranyl-HPPO and the terpene cyclase olcD catalyzes the cyclization of the terpenoid component, resulting in the formation of the tricyclic terpene moiety seen in predecaturin E. The cytochrome P450 monooxygenase then catalyzes the allylic oxidation of predecaturin E, which is followed by spirocylization with concomitant loss of one molecule of water to form decaturin E. Decaturin E is the substrate of the cytochrome P450 monooxygenase olcJ which hydroxylates it at the C-29 position to form decaturin F. The short-chain dehydrogenase/reductase olcF may catalyze the oxidation of decaturin F to generate the 29-hydroxyl-27-one intermediate, and subsequent hemiacetal formation probably leads to the formation of decaturin C. The dioxygenase olcK may be a peroxisomal enzyme that catalyzes the hydroxylation of decaturin C into decaturin A once decaturin C is shuttled into the peroxisome by the MFS transporter olcL. Finally the cytochrome P450 monooxygenase olcB catalyzes the oxidative rearrangement to yield 15-deoxyoxalicine B. In the absence of olcJ, decaturin E may be shunted to a pathway in which it is oxidized to a ketone, possibly by olcF, to form decaturin D, which undergoes further allylic oxidation to yield decaturin G. Moreover, in the absence of oclK or oclL, oclB can convert decaturin C into 15-deoxyoxalicine A. The protein is Geranylgeranyl pyrophosphate synthase olcC of Penicillium canescens.